We begin with the raw amino-acid sequence, 421 residues long: D-amino acid dehydrogenase (421 aa).

Valine 3–tyrosine 17 contributes to the FAD binding site.

The protein belongs to the DadA oxidoreductase family. FAD is required as a cofactor.

It carries out the reaction a D-alpha-amino acid + A + H2O = a 2-oxocarboxylate + AH2 + NH4(+). Its pathway is amino-acid degradation; D-alanine degradation; NH(3) and pyruvate from D-alanine: step 1/1. Its function is as follows. Oxidative deamination of D-amino acids. This is D-amino acid dehydrogenase from Acinetobacter baumannii (strain AB307-0294).